A 483-amino-acid polypeptide reads, in one-letter code: tRNA (guanine(37)-N(1))-methyltransferase (483 aa).

The segment at 1-24 (MEEAATLQSLSISSSSPFPNNSSP) is disordered. Residues 9-24 (SLSISSSSPFPNNSSP) are compositionally biased toward low complexity. Residues His-252, 290-291 (DL), and Asn-379 contribute to the S-adenosyl-L-methionine site.

This sequence belongs to the class I-like SAM-binding methyltransferase superfamily. TRM5/TYW2 family. In terms of assembly, monomer.

The protein resides in the mitochondrion matrix. The protein localises to the nucleus. It localises to the cytoplasm. The catalysed reaction is guanosine(37) in tRNA + S-adenosyl-L-methionine = N(1)-methylguanosine(37) in tRNA + S-adenosyl-L-homocysteine + H(+). In terms of biological role, specifically methylates the N1 position of guanosine-37 in various cytoplasmic and mitochondrial tRNAs. Methylation is not dependent on the nature of the nucleoside 5' of the target nucleoside. This is the first step in the biosynthesis of wybutosine (yW), a modified base adjacent to the anticodon of tRNAs and required for accurate decoding. The polypeptide is tRNA (guanine(37)-N(1))-methyltransferase (Ajellomyces capsulatus (strain G186AR / H82 / ATCC MYA-2454 / RMSCC 2432) (Darling's disease fungus)).